Consider the following 1857-residue polypeptide: Fatty acid synthase subunit alpha (1857 aa).

The interval 96–132 is disordered; the sequence is EEEPEATEPAPSATPAAPAAAPAAGAPPPPPSAGPAA. Positions 102–119 are enriched in low complexity; sequence TEPAPSATPAAPAAAPAA. Residues 139–214 form the Carrier domain; sequence VTAVDILRTL…ASMQATFNGQ (76 aa). At Ser-174 the chain carries O-(pantetheine 4'-phosphoryl)serine. The interval 577-604 is disordered; sequence QIIPQENGHSKKGGRSAAKRNTPTRPGK. Positions 648-845 are beta-ketoacyl reductase; the sequence is KNVLMTGAGA…GAVIGWTRGT (198 aa). Residues 1092-1633 form the Ketosynthase family 3 (KS3) domain; the sequence is LQEIVIQEDL…QKGAQVIGIH (542 aa). Residues Cys-1275, His-1518, and His-1559 each act as for beta-ketoacyl synthase activity in the active site. 3 residues coordinate Mg(2+): Asp-1743, Val-1744, and Glu-1745. Residues 1743-1745, Tyr-1769, Ser-1779, 1788-1798, 1812-1815, and 1842-1844 contribute to the acetyl-CoA site; these read DVE, EAVFKSLGVSS, VDAN, and ISH. The Mg(2+) site is built by Ser-1843 and His-1844.

Belongs to the thiolase-like superfamily. Fungal fatty acid synthetase subunit alpha family. [Alpha(6)beta(6)] hexamers of two multifunctional subunits (alpha and beta).

It catalyses the reaction acetyl-CoA + n malonyl-CoA + 2n NADPH + 4n H(+) = a long-chain-acyl-CoA + n CoA + n CO2 + 2n NADP(+).. The enzyme catalyses a fatty acyl-[ACP] + malonyl-[ACP] + H(+) = a 3-oxoacyl-[ACP] + holo-[ACP] + CO2. It carries out the reaction a (3R)-hydroxyacyl-[ACP] + NADP(+) = a 3-oxoacyl-[ACP] + NADPH + H(+). Functionally, fatty acid synthetase catalyzes the formation of long-chain fatty acids from acetyl-CoA, malonyl-CoA and NADPH. The alpha subunit contains domains for: acyl carrier protein, 3-oxoacyl-[acyl-carrier-protein] reductase, and 3-oxoacyl-[acyl-carrier-protein] synthase. The protein is Fatty acid synthase subunit alpha (FAS2) of Penicillium patulum (Penicillium griseofulvum).